Reading from the N-terminus, the 168-residue chain is Disulfide bond formation protein B (168 aa).

Residues 1 to 13 are Cytoplasmic-facing; it reads MFLTYFDAMPRRV. Residues 14–30 traverse the membrane as a helical segment; sequence LALVSLACVALLAFGLY. The Periplasmic segment spans residues 31–48; it reads LQHVVGLEPCPMCIVQRY. A disulfide bridge connects residues Cys40 and Cys43. The chain crosses the membrane as a helical span at residues 49–64; sequence ALVLVAVVAGITAVAK. Residues 65–70 lie on the Cytoplasmic side of the membrane; that stretch reads SRGLLI. Residues 71 to 88 traverse the membrane as a helical segment; it reads TGSGLLVLLSGFGAFVAA. Over 89-144 the chain is Periplasmic; the sequence is RQSFLQWYPPEVASCGRDFYGMIETFPLKRAIPMIFKGSGDCTKIDWTFLGLSIAN. A disulfide bond links Cys103 and Cys130. The chain crosses the membrane as a helical span at residues 145-163; the sequence is WSFLCFVAIALVGLVLITR. Over 164–168 the chain is Cytoplasmic; it reads LARQR.

Belongs to the DsbB family.

Its subcellular location is the cell inner membrane. Required for disulfide bond formation in some periplasmic proteins. Acts by oxidizing the DsbA protein. The polypeptide is Disulfide bond formation protein B (Polaromonas sp. (strain JS666 / ATCC BAA-500)).